The primary structure comprises 394 residues: Phosphoglycerate kinase (394 aa).

Residues 21 to 23 (DFN), Arg36, 59 to 62 (HLGR), Arg118, and Arg151 each bind substrate. Ser183 carries the post-translational modification Phosphoserine. Residue Lys201 coordinates ATP. Thr299 is modified (phosphothreonine). Residues Glu323 and 350–353 (GGDS) each bind ATP.

Belongs to the phosphoglycerate kinase family. In terms of assembly, monomer.

It localises to the cytoplasm. The enzyme catalyses (2R)-3-phosphoglycerate + ATP = (2R)-3-phospho-glyceroyl phosphate + ADP. The protein operates within carbohydrate degradation; glycolysis; pyruvate from D-glyceraldehyde 3-phosphate: step 2/5. The protein is Phosphoglycerate kinase of Geobacillus kaustophilus (strain HTA426).